The primary structure comprises 731 residues: SUN domain-containing protein 2 (731 aa).

Disordered regions lie at residues 1 to 69 and 106 to 142; these read MSRR…SHTS and SGDL…FGSS. The LMNA-binding stretch occupies residues 1 to 128; sequence MSRRSQRLTR…GSESSKANGL (128 aa). Residues 1–226 lie on the Nuclear side of the membrane; sequence MSRRSQRLTR…SRHFSLNLKS (226 aa). Phosphoserine is present on Ser-12. Over residues 18–33 the composition is skewed to low complexity; it reads GGSSSSGASSVAGSQG. Phosphoserine occurs at positions 39 and 55. Thr-117 bears the Phosphothreonine mark. 3 positions are modified to phosphoserine: Ser-120, Ser-123, and Ser-147. The helical transmembrane segment at 227-247 threads the bilayer; sequence FLWFLLLLLLLTGLTYGAWHF. The Perinuclear space segment spans residues 248-731; it reads YPLGLQTLQP…RFRVHGEPAH (484 aa). Coiled coils occupy residues 396–452 and 486–519; these read QESE…VADE and RSGL…KSAR. Residues 521-731 are sufficient for interaction with SYNE1 and SYNE2; it reads AAASLGQILQ…RFRVHGEPAH (211 aa). In terms of domain architecture, SUN spans 569-730; that stretch reads GASVISTRCS…YRFRVHGEPA (162 aa). Asn-650 carries an N-linked (GlcNAc...) asparagine glycan.

In terms of assembly, core component of the LINC complex which is composed of inner nuclear membrane SUN domain-containing proteins coupled to outer nuclear membrane KASH domain-containing nesprins. SUN and KASH domain-containing proteins seem to bind each other promiscuously; however, differentially expression of LINC complex constituents is giving rise to specific assemblies. At least SUN1/2-containing core LINC complexes are proposed to be hexameric composed of three protomers of each KASH and SUN domain-containing protein. Interacts with SYNE2; the SUN2:SYNE2/KASH2 LINC complex is a heterohexamer; the homotrimeric cloverleave-like conformation of the SUN domain is a prerequisite for LINC complex formation in which three separate SYNE2/KASH2 peptides bind at the interface of adjacent SUN domains. Component of a probable SUN2:KASH5 LINC complex. Interacts with SYNE1 and SYNE3; probably forming respective LINC complexes. Interacts with A-type lamin. Interaction with lamins B1 and C is hardly detectable. Interacts with EMD. Interacts with RAB5A. Interacts with TMEM43 and TMEM201. Interacts with IRAG2. Post-translationally, the disulfide bond with SYNE2 is required for stability of the SUN2:SYNE2/KASH2 LINC complex under tensile forces though not required for the interaction. The disulfide bond is proposed to be conserved in LINC complexes involved in force transmission. As to expression, highly expressed in heart, placenta and muscle.

It localises to the nucleus inner membrane. The protein resides in the nucleus envelope. The protein localises to the endosome membrane. In terms of biological role, as a component of the LINC (LInker of Nucleoskeleton and Cytoskeleton) complex, involved in the connection between the nuclear lamina and the cytoskeleton. The nucleocytoplasmic interactions established by the LINC complex play an important role in the transmission of mechanical forces across the nuclear envelope and in nuclear movement and positioning. Specifically, SYNE2 and SUN2 assemble in arrays of transmembrane actin-associated nuclear (TAN) lines which are bound to F-actin cables and couple the nucleus to retrograde actin flow during actin-dependent nuclear movement. Required for interkinetic nuclear migration (INM) and essential for nucleokinesis and centrosome-nucleus coupling during radial neuronal migration in the cerebral cortex and during glial migration. Required for nuclear migration in retinal photoreceptor progenitors implicating association with cytoplasmic dynein-dynactin and kinesin motor complexes, and probably B-type lamins; SUN1 and SUN2 seem to act redundantly. The SUN1/2:KASH5 LINC complex couples telomeres to microtubules during meiosis; SUN1 and SUN2 seem to act at least partial redundantly. Anchors chromosome movement in the prophase of meiosis and is involved in selective gene expression of coding and non-coding RNAs needed for gametogenesis. Required for telomere attachment to nuclear envelope and gametogenesis. May also function on endocytic vesicles as a receptor for Rab5-GDP and participate in the activation of Rab5. The protein is SUN domain-containing protein 2 of Mus musculus (Mouse).